Here is a 118-residue protein sequence, read N- to C-terminus: Large ribosomal subunit protein uL24 (118 aa).

Belongs to the universal ribosomal protein uL24 family. As to quaternary structure, part of the 50S ribosomal subunit.

Functionally, one of two assembly initiator proteins, it binds directly to the 5'-end of the 23S rRNA, where it nucleates assembly of the 50S subunit. One of the proteins that surrounds the polypeptide exit tunnel on the outside of the subunit. The polypeptide is Large ribosomal subunit protein uL24 (Synechococcus sp. (strain WH7803)).